A 1086-amino-acid polypeptide reads, in one-letter code: MANLLKTVVTGCSCPFLSNLGSCKVLPGKKNFLRTFHTHRILWCSAPVKPGIPYKQLTVGVPKEIFQNEKRVALSPAGVQALVKQGFNVVVESGAGEASKFSDDHYRAAGAQIQGAKEVLASDLVVKVRAPMLNPTLGVHEADLLKTSGTLISFIYPAQNPDLLNKLSKRKTTVLAMDQVPRVTIAQGYDALSSMANIAGYKAVVLAANHFGRFFTGQITAAGKVPPAKILIVGGGVAGLASAGAAKSMGAIVRGFDTRAAALEQFKSLGAEPLEVDLKESGEGQGGYAKEMSKEFIEAEMKLFAQQCKEVDILISTALIPGKKAPILFNKEMIESMKEGSVVVDLAAEAGGNFETTKPGELYVHKGITHIGYTDLPSRMATQASTLYSNNITKLLKAISPDKDNFYFEVKDDFDFGTMGHVIRGTVVMKDGQVIFPAPTPKNIPQGAPVKQKTVAELEAEKAATITPFRKTMTSASVYTAGLTGILGLGIAAPNLAFSQMVTTFGLAGIVGYHTVWGVTPALHSPLMSVTNAISGLTAVGGLVLMGGHLYPSTTSQGLAALATFISSVNIAGGFLVTQRMLDMFKRPTDPPEYNYLYLLPAGTFVGGYLASLYSGYNIEQIMYLGSGLCCVGALAGLSTQGTARLGNALGMIGVAGGLAATLGGLKPCPELLAQMSGAMALGGTIGLTIAKRIQISDLPQLVAAFHSLVGLAAVLTCIAEYIIEYPHFATDAAANLTKIVAYLGTYIGGVTFSGSLVAYGKLQGILKSAPLLLPGRHLLNAGLLAGSVGGIIPFMMDPSFTTGITCLGSVSALSAVMGVTLTAAIGGADMPVVITVLNSYSGWALCAEGFLLNNNLLTIVGALIGSSGAILSYIMCVAMNRSLANVILGGYGTTSTAGGKPMEISGTHTEINLDNAIDMIREANSIIITPGYGLCAAKAQYPIADLVKMLSEQGKKVRFGIHPVAGRMPGQLNVLLAEAGVPYDIVLEMDEINHDFPDTDLVLVIGANDTVNSAAQEDPNSIIAGMPVLEVWKSKQVIVMKRSLGVGYAAVDNPIFYKPNTAMLLGDAKKTCDALQAKVRESYQK.

Residues Met1 to Trp43 constitute a mitochondrion transit peptide. Topologically, residues Cys44 to Thr474 are mitochondrial matrix. N6-acetyllysine is present on Lys70. N6-succinyllysine is present on Lys117. Arg182–Thr184 serves as a coordination point for NAD(+). Residue Lys224 is modified to N6-succinyllysine. NAD(+) is bound by residues Val237, Asp257–Arg259, and Gly287. An N6-succinyllysine modification is found at Lys294. 2 residues coordinate NAD(+): Glu300 and Leu319. Residue Lys331 is modified to N6-succinyllysine. Lys397 carries the post-translational modification N6-acetyllysine. The next 4 membrane-spanning stretches (helical) occupy residues Ser475–Ala493, Met501–Pro521, Leu527–Met546, and Gly558–Thr578. Over Gln579–Asn595 the chain is Mitochondrial matrix. Transmembrane regions (helical) follow at residues Tyr596–Gly616, Ile622–Gly642, Leu646–Leu666, Leu672–Ala691, and Leu702–Tyr722. Topologically, residues Ile723–Lys739 are cytoplasmic. The next 5 helical transmembrane spans lie at Ile740–Tyr760, His778–Met797, Phe801–Gly819, Val833–Leu853, and Leu857–Ala879. At Met880–Lys1086 the chain is on the mitochondrial matrix side. NADP(+)-binding positions include Tyr933, Val965–Pro970, Asn1009–Thr1011, Gly1026–Met1027, Lys1042–Tyr1049, and Asp1068–Ala1069. Residue Lys1079 is modified to N6-succinyllysine.

It in the N-terminal section; belongs to the AlaDH/PNT family. This sequence in the C-terminal section; belongs to the PNT beta subunit family. In terms of assembly, homodimer.

It is found in the mitochondrion inner membrane. It catalyses the reaction NAD(+) + NADPH + H(+)(in) = NADH + NADP(+) + H(+)(out). Its function is as follows. The transhydrogenation between NADH and NADP is coupled to respiration and ATP hydrolysis and functions as a proton pump across the membrane. May play a role in reactive oxygen species (ROS) detoxification in the adrenal gland. The polypeptide is NAD(P) transhydrogenase, mitochondrial (NNT) (Bos taurus (Bovine)).